A 514-amino-acid polypeptide reads, in one-letter code: Beta-secretase 2 (514 aa).

The N-terminal stretch at 1-19 (MGALLRALLLLVLAQWLLS) is a signal peptide. Positions 20 to 62 (AVPALAPAPFTLPLQVAGATNHRASAVPGLGTPELPRADGLAL) are excised as a propeptide. Topologically, residues 20-469 (AVPALAPAPF…NEPILWIVSY (450 aa)) are extracellular. One can recognise a Peptidase A1 domain in the interval 88 to 425 (YYLEMLIGTP…DRAQRRVGFA (338 aa)). Residue Asp-106 is part of the active site. Asn-166 carries an N-linked (GlcNAc...) asparagine glycan. Cystine bridges form between Cys-229–Cys-429, Cys-288–Cys-453, and Cys-340–Cys-389. Asp-299 is a catalytic residue. Asn-362 carries an N-linked (GlcNAc...) asparagine glycan. Residues 470–490 (ALMSVCGAILLVLILLLLLPL) traverse the membrane as a helical segment. Over 491-514 (HCRHAPRDPEVVNDESSLVRHRWK) the chain is Cytoplasmic.

It belongs to the peptidase A1 family. As to quaternary structure, monomer. Interacts with RTN3 and RTN4. Post-translationally, undergoes autoproteolytic cleavage. In terms of processing, glycosylated. High expression in pancreatic islets. Expressed at much lower levels in the pituitary, colon, and ovaries and is nearly absent from all the other tissues.

It localises to the cell membrane. It is found in the golgi apparatus. The protein resides in the endoplasmic reticulum. Its subcellular location is the endosome. The protein localises to the melanosome. The enzyme catalyses Broad endopeptidase specificity. Cleaves Glu-Val-Asn-Leu-|-Asp-Ala-Glu-Phe in the Swedish variant of Alzheimer's amyloid precursor protein.. Functionally, responsible for the proteolytic processing of the amyloid precursor protein (APP). Cleaves APP, between residues 690 and 691, leading to the generation and extracellular release of beta-cleaved soluble APP, and a corresponding cell-associated C-terminal fragment which is later released by gamma-secretase. It has also been shown that it can cleave APP between residues 671 and 672. Involved in the proteolytic shedding of PMEL at early stages of melanosome biogenesis. Cleaves PMEL within the M-beta fragment to release the amyloidogenic PMEL luminal fragment containing M-alpha and a small portion of M-beta N-terminus. This is a prerequisite step for subsequent processing and assembly of PMEL fibrils into amyloid sheets. Responsible also for the proteolytic processing of CLTRN in pancreatic beta cells. The sequence is that of Beta-secretase 2 (Bace2) from Mus musculus (Mouse).